Reading from the N-terminus, the 388-residue chain is UDP-galactose transporter senju (388 aa).

10 consecutive transmembrane segments (helical) span residues 13 to 33 (LTFV…IFVT), 46 to 66 (TVTV…CLYC), 84 to 104 (VLGL…LAFV), 113 to 133 (TYYL…QIIF), 142 to 162 (WISL…FGSF), 202 to 222 (FSLS…AGVY), 236 to 256 (IFVQ…VILL), 276 to 296 (FSVL…SFFL), 309 to 329 (ALEL…PIYM), and 331 to 351 (TALA…SPVV).

This sequence belongs to the nucleotide-sugar transporter family.

Its subcellular location is the golgi apparatus membrane. UDP-galactose transporter involved in the synthesis of galactose-containing glycans. Plays a role in quiescence of the innate immune response, possibly by regulating glycosylation of the Toll pathway ligand spz. The sequence is that of UDP-galactose transporter senju from Drosophila melanogaster (Fruit fly).